Reading from the N-terminus, the 130-residue chain is Glycine cleavage system H protein (130 aa).

The 83-residue stretch at 28–110 (TVRIGITSVA…FGEGWLFEVE (83 aa)) folds into the Lipoyl-binding domain. At Lys69 the chain carries N6-lipoyllysine.

It belongs to the GcvH family. The glycine cleavage system is composed of four proteins: P, T, L and H. (R)-lipoate is required as a cofactor.

In terms of biological role, the glycine cleavage system catalyzes the degradation of glycine. The H protein shuttles the methylamine group of glycine from the P protein to the T protein. This chain is Glycine cleavage system H protein, found in Corynebacterium aurimucosum (strain ATCC 700975 / DSM 44827 / CIP 107346 / CN-1) (Corynebacterium nigricans).